The chain runs to 822 residues: Stemar-13-ene synthase (822 aa).

The span at 1 to 10 shows a compositional bias: polar residues; the sequence is MMLLSSSYSG. Residues 1–29 form a disordered region; that stretch reads MMLLSSSYSGGQFPGVSPLGTRPKRSTTV. The Mg(2+) site is built by Asp-553, Asp-557, Asn-698, Thr-702, and Glu-706. The DDXXD motif signature appears at 553–557; that stretch reads DDLFD.

The protein belongs to the terpene synthase family. Mg(2+) is required as a cofactor.

It catalyses the reaction 9alpha-copalyl diphosphate = stemar-13-ene + diphosphate. Catalyzes the conversion of syn-copalyl diphosphate to the phytoalexin precursor stemarene. The chain is Stemar-13-ene synthase (KSL8) from Oryza sativa subsp. japonica (Rice).